The following is a 283-amino-acid chain: Shikimate kinase (283 aa).

Residue 86–96 (PIKSGLSSSSA) coordinates ATP.

It belongs to the GHMP kinase family. Archaeal shikimate kinase subfamily.

Its subcellular location is the cytoplasm. The catalysed reaction is shikimate + ATP = 3-phosphoshikimate + ADP + H(+). Its pathway is metabolic intermediate biosynthesis; chorismate biosynthesis; chorismate from D-erythrose 4-phosphate and phosphoenolpyruvate: step 5/7. The protein is Shikimate kinase of Methanococcus maripaludis (strain C6 / ATCC BAA-1332).